The following is an 857-amino-acid chain: uncharacterized protein (857 aa).

This is an uncharacterized protein from Bacillus subtilis (strain 168).